A 410-amino-acid polypeptide reads, in one-letter code: Argininosuccinate synthase (410 aa).

ATP-binding positions include 14 to 22 and alanine 41; that span reads AYSGGLDTS. Tyrosine 92 and serine 97 together coordinate L-citrulline. Glycine 122 serves as a coordination point for ATP. Threonine 124, asparagine 128, and aspartate 129 together coordinate L-aspartate. Asparagine 128 contributes to the L-citrulline binding site. Residues arginine 132, serine 183, serine 192, glutamate 268, and tyrosine 280 each contribute to the L-citrulline site.

Belongs to the argininosuccinate synthase family. Type 1 subfamily. In terms of assembly, homotetramer.

The protein localises to the cytoplasm. The enzyme catalyses L-citrulline + L-aspartate + ATP = 2-(N(omega)-L-arginino)succinate + AMP + diphosphate + H(+). It participates in amino-acid biosynthesis; L-arginine biosynthesis; L-arginine from L-ornithine and carbamoyl phosphate: step 2/3. In Parvibaculum lavamentivorans (strain DS-1 / DSM 13023 / NCIMB 13966), this protein is Argininosuccinate synthase.